The chain runs to 133 residues: Fluoride-specific ion channel FluC 3 (133 aa).

The next 3 membrane-spanning stretches (helical) occupy residues 7 to 27 (ILVLVGGFIGGVMRFFLSGYV), 37 to 57 (WGTFVVNVSGAFVIGTAAGLG), and 60 to 80 (LGAIFSTTIFHEFIMVGLLGG). Na(+) is bound by residues G79 and T82. Residues 107–127 (IVASALLCVLAVAAGYGGIMW) form a helical membrane-spanning segment.

Belongs to the fluoride channel Fluc/FEX (TC 1.A.43) family.

The protein resides in the cell inner membrane. It carries out the reaction fluoride(in) = fluoride(out). With respect to regulation, na(+) is not transported, but it plays an essential structural role and its presence is essential for fluoride channel function. Functionally, fluoride-specific ion channel. Important for reducing fluoride concentration in the cell, thus reducing its toxicity. The polypeptide is Fluoride-specific ion channel FluC 3 (Brucella suis biovar 1 (strain 1330)).